Consider the following 440-residue polypeptide: Ferredoxin--NADP reductase (440 aa).

Positions 17-75 constitute a CpcD-like domain; that stretch reads SRVFVYEVVGMRQNEETDQTNYPIRKSGSVFIRVPYNRMNQEMQRITRLGGKIVSIQTV. Residues 93-142 are disordered; it reads ASSETAKSEGNGKATPVKTDSGAKGFAKPPAEEQLKKKDNKGNTMTQAKA. Residues 122–133 show a composition bias toward basic and acidic residues; sequence PAEEQLKKKDNK. Residues 155-279 form the FAD-binding FR-type domain; the sequence is NAPFIGKVIS…TGPVGKEMLL (125 aa). FAD contacts are provided by residues 214-217, 235-237, tyrosine 241, 253-255, and threonine 294; these read RLYS, CVR, and VCS. NADP(+) is bound by residues serine 217 and arginine 237. Residues threonine 294, 330-331, 360-361, 370-374, 399-400, and glutamate 438 each bind NADP(+); these read VP, SR, RMYIQ, and GL.

It belongs to the ferredoxin--NADP reductase type 1 family. Requires FAD as cofactor.

The protein resides in the cellular thylakoid membrane. The enzyme catalyses 2 reduced [2Fe-2S]-[ferredoxin] + NADP(+) + H(+) = 2 oxidized [2Fe-2S]-[ferredoxin] + NADPH. This chain is Ferredoxin--NADP reductase (petH), found in Trichormus variabilis (strain ATCC 29413 / PCC 7937) (Anabaena variabilis).